Consider the following 363-residue polypeptide: NAD(P)H-quinone oxidoreductase subunit 1, chloroplastic (363 aa).

A run of 6 helical transmembrane segments spans residues Leu30–Leu50, Phe98–Phe118, Ile129–Gly149, Tyr248–Ser268, Val300–Ile320, and Leu336–Thr356.

Belongs to the complex I subunit 1 family. In terms of assembly, NDH is composed of at least 16 different subunits, 5 of which are encoded in the nucleus.

It is found in the plastid. The protein resides in the chloroplast thylakoid membrane. The enzyme catalyses a plastoquinone + NADH + (n+1) H(+)(in) = a plastoquinol + NAD(+) + n H(+)(out). It catalyses the reaction a plastoquinone + NADPH + (n+1) H(+)(in) = a plastoquinol + NADP(+) + n H(+)(out). Its function is as follows. NDH shuttles electrons from NAD(P)H:plastoquinone, via FMN and iron-sulfur (Fe-S) centers, to quinones in the photosynthetic chain and possibly in a chloroplast respiratory chain. The immediate electron acceptor for the enzyme in this species is believed to be plastoquinone. Couples the redox reaction to proton translocation, and thus conserves the redox energy in a proton gradient. In Vitis vinifera (Grape), this protein is NAD(P)H-quinone oxidoreductase subunit 1, chloroplastic.